The following is a 98-amino-acid chain: UPF0251 protein SO_0727 (98 aa).

This sequence belongs to the UPF0251 family.

The sequence is that of UPF0251 protein SO_0727 from Shewanella oneidensis (strain ATCC 700550 / JCM 31522 / CIP 106686 / LMG 19005 / NCIMB 14063 / MR-1).